Reading from the N-terminus, the 450-residue chain is UDP-N-acetylmuramoylalanine--D-glutamate ligase (450 aa).

119-125 (GSNGKTT) is a binding site for ATP.

This sequence belongs to the MurCDEF family.

It localises to the cytoplasm. The enzyme catalyses UDP-N-acetyl-alpha-D-muramoyl-L-alanine + D-glutamate + ATP = UDP-N-acetyl-alpha-D-muramoyl-L-alanyl-D-glutamate + ADP + phosphate + H(+). It functions in the pathway cell wall biogenesis; peptidoglycan biosynthesis. In terms of biological role, cell wall formation. Catalyzes the addition of glutamate to the nucleotide precursor UDP-N-acetylmuramoyl-L-alanine (UMA). This is UDP-N-acetylmuramoylalanine--D-glutamate ligase from Bacillus mycoides (strain KBAB4) (Bacillus weihenstephanensis).